Consider the following 367-residue polypeptide: 2-aminoethylphosphonate--pyruvate transaminase (367 aa).

Lys194 is subject to N6-(pyridoxal phosphate)lysine.

This sequence belongs to the class-V pyridoxal-phosphate-dependent aminotransferase family. PhnW subfamily. In terms of assembly, homodimer. Requires pyridoxal 5'-phosphate as cofactor.

The catalysed reaction is (2-aminoethyl)phosphonate + pyruvate = phosphonoacetaldehyde + L-alanine. Functionally, involved in phosphonate degradation. The sequence is that of 2-aminoethylphosphonate--pyruvate transaminase from Salmonella heidelberg (strain SL476).